The chain runs to 1939 residues: MTDAQMADFGAAAQYLRKSEKERLEAQTRPFDIRTECFVPDDKEEFVKAKILSREGGKVIAETENGKTVTVKEDQVLQQNPPKFDKIEDMAMLTFLHEPAVLFNLKERYAAWMIYTYSGLFCVTVNPYKWLPVYNAEVVAAYRGKKRSEAPPHIFSISDNAYQYMLTDRENQSILITGESGAGKTVNTKRVIQYFASIAAIGDRGKKDNANANKGTLEDQIIQANPALEAFGNAKTVRNDNSSRFGKFIRIHFGATGKLASADIETYLLEKSRVIFQLKAERNYHIFYQILSNKKPELLDMLLVTNNPYDYAFVSQGEVSVASIDDSEELMATDSAFDVLGFTSEEKAGVYKLTGAIMHYGNMKFKQKQREEQAEPDGTEDADKSAYLMGLNSADLLKGLCHPRVKVGNEYVTKGQSVQQVYYSIGALAKAVYEKMFNWMVTRINATLETKQPRQYFIGVLDIAGFEIFDFNSFEQLCINFTNEKLQQFFNHHMFVLEQEEYKKEGIEWTFIDFGMDLQACIDLIEKPMGIMSILEEECMFPKATDMTFKAKLYDNHLGKSNNFQKPRNIKGKQEAHFSLIHYAGTVDYNILGWLEKNKDPLNETVVALYQKSSLKLMATLFSSYATADTGDSGKSKGGKKKGSSFQTVSALHRENLNKLMTNLRTTHPHFVRCIIPNERKAPGVMDNPLVMHQLRCNGVLEGIRICRKGFPNRILYGDFRQRYRILNPVAIPEGQFIDSRKGTEKLLSSLDIDHNQYKFGHTKVFFKAGLLGLLEEMRDERLSRIITRMQAQARGQLMRIEFKKIVERRDALLVIQWNIRAFMGVKNWPWMKLYFKIKPLLKSAETEKEMATMKEEFGRIKETLEKSEARRKELEEKMVSLLQEKNDLQLQVQAEQDNLNDAEERCDQLIKNKIQLEAKVKEMNERLEDEEEMNAELTAKKRKLEDECSELKKDIDDLELTLAKVEKEKHATENKVKNLTEEMAGLDEIIAKLTKEKKALQEAHQQALDDLQVEEDKVNSLSKSKVKLEQQVDDLEGSLEQEKKVRMDLERAKRKLEGDLKLTQESIMDLENDKLQLEEKLKKKEFDINQQNSKIEDEQVLALQLQKKLKENQARIEELEEELEAERTARAKVEKLRSDLSRELEEISERLEEAGGATSVQIEMNKKREAEFQKMRRDLEEATLQHEATAAALRKKHADSVAELGEQIDNLQRVKQKLEKEKSEFKLELDDVTSNMEQIIKAKANLEKVSRTLEDQANEYRVKLEEAQRSLNDFTTQRAKLQTENGELARQLEEKEALISQLTRGKLSYTQQMEDLKRQLEEEGKAKNALAHALQSARHDCDLLREQYEEETEAKAELQRVLSKANSEVAQWRTKYETDAIQRTEELEEAKKKLAQRLQDAEEAVEAVNAKCSSLEKTKHRLQNEIEDLMVDVERSNAAAAALDKKQRNFDKILAEWKQKYEESQSELESSQKEARSLSTELFKLKNAYEESLEHLETFKRENKNLQEEISDLTEQLGEGGKNVHELEKVRKQLEVEKLELQSALEEAEASLEHEEGKILRAQLEFNQIKAEIERKLAEKDEEMEQAKRNHQRVVDSLQTSLDAETRSRNEVLRVKKKMEGDLNEMEIQLSHANRMAAEAQKQVKSLQSLLKDTQIQLDDAVRANDDLKENIAIVERRNNLLQAELEELRAVVEQTERSRKLAEQELIETSERVQLLHSQNTSLINQKKKMESDLTQLQSEVEEAVQECRNAEEKAKKAITDAAMMAEELKKEQDTSAHLERMKKNMEQTIKDLQHRLDEAEQIALKGGKKQLQKLEARVRELEGELEAEQKRNAESVKGMRKSERRIKELTYQTEEDKKNLLRLQDLVDKLQLKVKAYKRQAEEAEEQANTNLSKFRKVQHELDEAEERADIAESQVNKLRAKSRDIGAKQKMHDEE.

Residues 32–81 enclose the Myosin N-terminal SH3-like domain; the sequence is DIRTECFVPDDKEEFVKAKILSREGGKVIAETENGKTVTVKEDQVLQQNP. The Myosin motor domain maps to 85–780; sequence DKIEDMAMLT…LLGLLEEMRD (696 aa). Lys-129 is subject to N6,N6,N6-trimethyllysine. Position 178 to 185 (178 to 185) interacts with ATP; sequence GESGAGKT. Thr-379 carries the phosphothreonine modification. Ser-417 is subject to Phosphoserine. Actin-binding stretches follow at residues 657-679 and 759-773; these read LNKLMTNLRTTHPHFVRCIIPNE and KFGHTKVFFKAGLLG. The IQ domain maps to 783–812; the sequence is LSRIITRMQAQARGQLMRIEFKKIVERRDA. The stretch at 842–1939 forms a coiled coil; it reads LKSAETEKEM…GAKQKMHDEE (1098 aa). The residue at position 1139 (Ser-1139) is a Phosphoserine. Tyr-1261 carries the phosphotyrosine modification. Ser-1271 is modified (phosphoserine). 2 positions are modified to phosphothreonine: Thr-1277 and Thr-1284. Ser-1309 bears the Phosphoserine mark. A Phosphotyrosine modification is found at Tyr-1310. Thr-1311 bears the Phosphothreonine mark. Ser-1512 bears the Phosphoserine mark. Position 1515 is a phosphothreonine (Thr-1515). Basic and acidic residues-rich tracts occupy residues 1826 to 1837 and 1925 to 1939; these read GELEAEQKRNAE and KSRDIGAKQKMHDEE. 2 disordered regions span residues 1826-1849 and 1909-1939; these read GELEAEQKRNAESVKGMRKSERRI and EERADIAESQVNKLRAKSRDIGAKQKMHDEE.

The protein belongs to the TRAFAC class myosin-kinesin ATPase superfamily. Myosin family. In terms of assembly, muscle myosin is a hexameric protein that consists of 2 heavy chain subunits (MHC), 2 alkali light chain subunits (MLC) and 2 regulatory light chain subunits (MLC-2).

The protein localises to the cytoplasm. It localises to the myofibril. In terms of biological role, muscle contraction. The sequence is that of Myosin-6 (MYH6) from Homo sapiens (Human).